The chain runs to 337 residues: Biotin synthase (337 aa).

Residues 58–283 (PEVEVEGIIS…RTILRFAGGR (226 aa)) form the Radical SAM core domain. [4Fe-4S] cluster contacts are provided by Cys-73, Cys-77, and Cys-80. Positions 116, 149, 208, and 278 each coordinate [2Fe-2S] cluster.

The protein belongs to the radical SAM superfamily. Biotin synthase family. Homodimer. It depends on [4Fe-4S] cluster as a cofactor. [2Fe-2S] cluster is required as a cofactor.

It catalyses the reaction (4R,5S)-dethiobiotin + (sulfur carrier)-SH + 2 reduced [2Fe-2S]-[ferredoxin] + 2 S-adenosyl-L-methionine = (sulfur carrier)-H + biotin + 2 5'-deoxyadenosine + 2 L-methionine + 2 oxidized [2Fe-2S]-[ferredoxin]. It functions in the pathway cofactor biosynthesis; biotin biosynthesis; biotin from 7,8-diaminononanoate: step 2/2. Functionally, catalyzes the conversion of dethiobiotin (DTB) to biotin by the insertion of a sulfur atom into dethiobiotin via a radical-based mechanism. The polypeptide is Biotin synthase (Rhodococcus jostii (strain RHA1)).